The sequence spans 349 residues: Small ribosomal subunit biogenesis GTPase RsgA (349 aa).

Over residues 1–11 (MSKKKLSKGQQ) the composition is skewed to basic residues. Residues 1–35 (MSKKKLSKGQQRRVSANHQRRLKHADSKVEWDDSQ) are disordered. The 162-residue stretch at 111-272 (YDGLKPIAAN…VIDSPGVREF (162 aa)) folds into the CP-type G domain. Residues 158–161 (NKID) and 212–220 (GQSGVGKSS) each bind GTP. Cys-296, Cys-301, His-303, and Cys-309 together coordinate Zn(2+).

This sequence belongs to the TRAFAC class YlqF/YawG GTPase family. RsgA subfamily. As to quaternary structure, monomer. Associates with 30S ribosomal subunit, binds 16S rRNA. The cofactor is Zn(2+).

It is found in the cytoplasm. One of several proteins that assist in the late maturation steps of the functional core of the 30S ribosomal subunit. Helps release RbfA from mature subunits. May play a role in the assembly of ribosomal proteins into the subunit. Circularly permuted GTPase that catalyzes slow GTP hydrolysis, GTPase activity is stimulated by the 30S ribosomal subunit. The protein is Small ribosomal subunit biogenesis GTPase RsgA of Dickeya dadantii (strain 3937) (Erwinia chrysanthemi (strain 3937)).